The primary structure comprises 179 residues: MEKIIIDHDRFLRTISRISHEIIEKHQTLDDLVIVGIKRRGAEIAELLQRRVEELSGINLPSMELDITFYRDDLTLVDQEDKMPVYSGSSQYLNIQDKTVILVDDVLFTGRTIRAAMDALTDFGRAAKIELVIFVDRGHRELPIRADYVGKNVPTSRDELVQVRTEKQDGCYEVAILGK.

The PRPP-binding motif lies at 100–112 (VILVDDVLFTGRT).

This sequence belongs to the purine/pyrimidine phosphoribosyltransferase family. PyrR subfamily.

The catalysed reaction is UMP + diphosphate = 5-phospho-alpha-D-ribose 1-diphosphate + uracil. Regulates the transcription of the pyrimidine nucleotide (pyr) operon in response to exogenous pyrimidines. In terms of biological role, also displays a weak uracil phosphoribosyltransferase activity which is not physiologically significant. This Haemophilus influenzae (strain 86-028NP) protein is Bifunctional protein PyrR.